The following is a 345-amino-acid chain: MHVDDFSFDLPEALIAHHPPEQRRDSRLLCLDRDTGAVADRRFPDLVDLLRPEDLLVLNDTRVIPARLFGHKPTGGRVEVLVERPLDRHRVLARLRASKVPAPGTVLTLEGGVAAEVTGREGEFFTLRFTAEQTVLELLEHHGHMPLPPYIRRADVAADRERYQTVFARRPGAVAAPTAGLHFDNELLARIGARGVDTAWVTLHVGSGTFAPLRVSDPREHRMHSEWLDVPPATCAAIERARGRGGRVVAVGTTVVRALETAAQDGAVQPYQGETDIFIYPGHRFHAVDALVTNFHLPGSTLLMLVSAFAGRERVLAAYRHAVAQRYRFFSYGDAMFIAAGAADE.

Belongs to the QueA family. As to quaternary structure, monomer.

The protein resides in the cytoplasm. The enzyme catalyses 7-aminomethyl-7-carbaguanosine(34) in tRNA + S-adenosyl-L-methionine = epoxyqueuosine(34) in tRNA + adenine + L-methionine + 2 H(+). It participates in tRNA modification; tRNA-queuosine biosynthesis. Its function is as follows. Transfers and isomerizes the ribose moiety from AdoMet to the 7-aminomethyl group of 7-deazaguanine (preQ1-tRNA) to give epoxyqueuosine (oQ-tRNA). The chain is S-adenosylmethionine:tRNA ribosyltransferase-isomerase from Alkalilimnicola ehrlichii (strain ATCC BAA-1101 / DSM 17681 / MLHE-1).